The primary structure comprises 363 residues: Phospho-N-acetylmuramoyl-pentapeptide-transferase (363 aa).

10 helical membrane-spanning segments follow: residues 27–47 (SGCA…PFIA), 76–96 (TMGG…WADL), 97–117 (TNGF…VGFA), 137–157 (LGCE…LTPP), 171–191 (VLLP…TGFG), 202–222 (GLAI…SYLV), 242–262 (LAVF…FNAP), 265–285 (AVFM…AVAV), 292–312 (VLCI…IQIF), and 340–360 (KIVI…LATL).

This sequence belongs to the glycosyltransferase 4 family. MraY subfamily. Mg(2+) is required as a cofactor.

The protein resides in the cell inner membrane. It carries out the reaction UDP-N-acetyl-alpha-D-muramoyl-L-alanyl-gamma-D-glutamyl-meso-2,6-diaminopimeloyl-D-alanyl-D-alanine + di-trans,octa-cis-undecaprenyl phosphate = di-trans,octa-cis-undecaprenyl diphospho-N-acetyl-alpha-D-muramoyl-L-alanyl-D-glutamyl-meso-2,6-diaminopimeloyl-D-alanyl-D-alanine + UMP. It participates in cell wall biogenesis; peptidoglycan biosynthesis. Catalyzes the initial step of the lipid cycle reactions in the biosynthesis of the cell wall peptidoglycan: transfers peptidoglycan precursor phospho-MurNAc-pentapeptide from UDP-MurNAc-pentapeptide onto the lipid carrier undecaprenyl phosphate, yielding undecaprenyl-pyrophosphoryl-MurNAc-pentapeptide, known as lipid I. In Gluconobacter oxydans (strain 621H) (Gluconobacter suboxydans), this protein is Phospho-N-acetylmuramoyl-pentapeptide-transferase.